The primary structure comprises 300 residues: Probable ABC transporter permease protein YurM (300 aa).

The next 6 membrane-spanning stretches (helical) occupy residues 37–57, 98–118, 129–149, 161–181, 204–224, and 264–284; these read VWVF…WMVM, VIVT…AAYG, FFLV…LVPL, TYWA…IILI, FGVF…TSGI, and WGVL…LFLL. The region spanning 94–285 is the ABC transmembrane type-1 domain; it reads FMNSVIVTAL…APIIILFLLM (192 aa).

The protein belongs to the binding-protein-dependent transport system permease family. MalFG subfamily.

It is found in the cell membrane. Its function is as follows. Probably part of the binding-protein-dependent transport system YurMNO. Probably responsible for the translocation of the substrate across the membrane. This Bacillus subtilis (strain 168) protein is Probable ABC transporter permease protein YurM (yurM).